Here is a 189-residue protein sequence, read N- to C-terminus: Parkinson disease protein 7 homolog (189 aa).

Ala-2 bears the N-acetylalanine mark. S-palmitoyl cysteine attachment occurs at residues Cys-46 and Cys-53. A Phosphotyrosine modification is found at Tyr-67. Cys-106 (nucleophile) is an active-site residue. At Cys-106 the chain carries Cysteine sulfinic acid (-SO2H); alternate. Cys-106 is lipidated: S-palmitoyl cysteine; alternate. The active site involves His-126. Lys-130 is covalently cross-linked (Glycyl lysine isopeptide (Lys-Gly) (interchain with G-Cter in SUMO)). Lys-148 is subject to N6-acetyllysine. Lys-182 carries the N6-succinyllysine modification.

It belongs to the peptidase C56 family. Homodimer. Binds EFCAB6/DJBP and PIAS2. Part of a ternary complex containing PARK7, EFCAB6/DJBP and AR. Interacts (via N-terminus) with OTUD7B. Interacts with BBS1, HIPK1, CLCF1 and MTERF. Forms a complex with PINK1 and PRKN. Interacts (via C-terminus) with NCF1; the interaction is enhanced by LPS and modulates NCF1 phosphorylation and membrane translocation. Interacts with NENF. It depends on Deglycase activity does not require glutathione as a cofactor, however, glycated glutathione constitutes a PARK7 substrate. as a cofactor. In terms of processing, sumoylated on Lys-130 by PIAS2 or PIAS4; which is essential for cell-growth promoting activity and transforming activity. Undergoes cleavage of a C-terminal peptide and subsequent activation of protease activity in response to oxidative stress.

It is found in the cell membrane. The protein localises to the cytoplasm. The protein resides in the nucleus. Its subcellular location is the membrane raft. It localises to the mitochondrion. It is found in the endoplasmic reticulum. It carries out the reaction N(omega)-(1-hydroxy-2-oxopropyl)-L-arginyl-[protein] + H2O = lactate + L-arginyl-[protein] + H(+). The enzyme catalyses N(6)-(1-hydroxy-2-oxopropyl)-L-lysyl-[protein] + H2O = lactate + L-lysyl-[protein] + H(+). It catalyses the reaction S-(1-hydroxy-2-oxopropyl)-L-cysteinyl-[protein] + H2O = lactate + L-cysteinyl-[protein] + H(+). The catalysed reaction is N(omega)-(1-hydroxy-2-oxoethyl)-L-arginyl-[protein] + H2O = L-arginyl-[protein] + glycolate + H(+). It carries out the reaction N(6)-(1-hydroxy-2-oxoethyl)-L-lysyl-[protein] + H2O = glycolate + L-lysyl-[protein] + H(+). The enzyme catalyses S-(1-hydroxy-2-oxoethyl)-L-cysteinyl-[protein] + H2O = glycolate + L-cysteinyl-[protein] + H(+). It catalyses the reaction N(2)-(1-hydroxy-2-oxopropyl)-dGTP + H2O = lactate + dGTP + H(+). The catalysed reaction is N(2)-(1-hydroxy-2-oxopropyl)-GTP + H2O = lactate + GTP + H(+). It carries out the reaction N(2)-(1-hydroxy-2-oxopropyl)-GDP + H2O = lactate + GDP + H(+). The enzyme catalyses N(2)-(1-hydroxy-2-oxopropyl)-GMP + H2O = lactate + GMP + H(+). It catalyses the reaction N(2)-(1-hydroxy-2-oxoethyl)-dGTP + H2O = dGTP + glycolate + H(+). The catalysed reaction is N(2)-(1-hydroxy-2-oxoethyl)-GTP + H2O = glycolate + GTP + H(+). It carries out the reaction N(2)-(1-hydroxy-2-oxoethyl)-GDP + H2O = glycolate + GDP + H(+). The enzyme catalyses N(2)-(1-hydroxy-2-oxoethyl)-GMP + H2O = glycolate + GMP + H(+). It catalyses the reaction an N(2)-(1-hydroxy-2-oxopropyl)-guanosine in RNA + H2O = a guanosine in RNA + lactate + H(+). The catalysed reaction is an N(2)-(1-hydroxy-2-oxopropyl)-2'-deoxyguanosine in DNA + H2O = a 2'-deoxyguanosine in DNA + lactate + H(+). It carries out the reaction an N(2)-(1-hydroxy-2-oxoethyl)-guanosine in RNA + H2O = a guanosine in RNA + glycolate + H(+). The enzyme catalyses an N(2)-(1-hydroxy-2-oxoethyl)-2'-deoxyguanosine in DNA + H2O = a 2'-deoxyguanosine in DNA + glycolate + H(+). In terms of biological role, multifunctional protein with controversial molecular function which plays an important role in cell protection against oxidative stress and cell death acting as oxidative stress sensor and redox-sensitive chaperone and protease. It is involved in neuroprotective mechanisms like the stabilization of NFE2L2 and PINK1 proteins, male fertility as a positive regulator of androgen signaling pathway as well as cell growth and transformation through, for instance, the modulation of NF-kappa-B signaling pathway. Has been described as a protein and nucleotide deglycase that catalyzes the deglycation of the Maillard adducts formed between amino groups of proteins or nucleotides and reactive carbonyl groups of glyoxals. But this function is rebuted by other works. As a protein deglycase, repairs methylglyoxal- and glyoxal-glycated proteins, and releases repaired proteins and lactate or glycolate, respectively. Deglycates cysteine, arginine and lysine residues in proteins, and thus reactivates these proteins by reversing glycation by glyoxals. Acts on early glycation intermediates (hemithioacetals and aminocarbinols), preventing the formation of advanced glycation endproducts (AGE) that cause irreversible damage. Also functions as a nucleotide deglycase able to repair glycated guanine in the free nucleotide pool (GTP, GDP, GMP, dGTP) and in DNA and RNA. Is thus involved in a major nucleotide repair system named guanine glycation repair (GG repair), dedicated to reversing methylglyoxal and glyoxal damage via nucleotide sanitization and direct nucleic acid repair. Protects histones from adduction by methylglyoxal, controls the levels of methylglyoxal-derived argininine modifications on chromatin. Able to remove the glycations and restore histone 3, histone glycation disrupts both local and global chromatin architecture by altering histone-DNA interactions as well as histone acetylation and ubiquitination levels. Displays a very low glyoxalase activity that may reflect its deglycase activity. Eliminates hydrogen peroxide and protects cells against hydrogen peroxide-induced cell death. Required for correct mitochondrial morphology and function as well as for autophagy of dysfunctional mitochondria. Plays a role in regulating expression or stability of the mitochondrial uncoupling proteins SLC25A14 and SLC25A27 in dopaminergic neurons of the substantia nigra pars compacta and attenuates the oxidative stress induced by calcium entry into the neurons via L-type channels during pacemaking. Regulates astrocyte inflammatory responses, may modulate lipid rafts-dependent endocytosis in astrocytes and neuronal cells. In pancreatic islets, involved in the maintenance of mitochondrial reactive oxygen species (ROS) levels and glucose homeostasis in an age- and diet dependent manner. Protects pancreatic beta cells from cell death induced by inflammatory and cytotoxic setting. Binds to a number of mRNAs containing multiple copies of GG or CC motifs and partially inhibits their translation but dissociates following oxidative stress. Metal-binding protein able to bind copper as well as toxic mercury ions, enhances the cell protection mechanism against induced metal toxicity. In macrophages, interacts with the NADPH oxidase subunit NCF1 to direct NADPH oxidase-dependent ROS production, and protects against sepsis. This Chlorocebus aethiops (Green monkey) protein is Parkinson disease protein 7 homolog.